Consider the following 1580-residue polypeptide: Transcriptional activator GLI3 (1580 aa).

Met-1 is subject to N-acetylmethionine. Polar residues-rich tracts occupy residues 1–10 (MEAQSHSSTT) and 58–78 (ITMQ…PSTS). The segment at 1–79 (MEAQSHSSTT…KVSEEPSTSS (79 aa)) is disordered. Omega-N-methylarginine is present on Arg-175. Residues 368-475 (QSLGSAFGHS…DKDESKQEPE (108 aa)) form a disordered region. Residues 401 to 427 (NPVQVSSGPSESSQNKPTSESAVSSTG) show a composition bias toward polar residues. Residues Lys-438 and Lys-462 each participate in a glycyl lysine isopeptide (Lys-Gly) (interchain with G-Cter in SUMO2) cross-link. Residues 461-474 (VKEEGDKDESKQEP) are compositionally biased toward basic and acidic residues. C2H2-type zinc fingers lie at residues 480 to 505 (TNCH…NNDH), 513 to 540 (FVCR…MRRH), 546 to 570 (HKCT…LRSH), 576 to 601 (YVCE…NRTH), and 607 to 632 (YVCK…KTVH). The segment at 620-728 (DPSSLRKHVK…PISNYSNSGL (109 aa)) is disordered. Basic and acidic residues predominate over residues 632 to 648 (HGPEAHVTKKQRGDIHP). Position 664 is a phosphoserine (Ser-664). Residues 684–699 (SKREECLQVKTVKAEK) show a composition bias toward basic and acidic residues. Positions 703–726 (SQPSPGGQSSCSSQQSPISNYSNS) are enriched in low complexity. The tract at residues 745–845 (DETPIMDSTI…VDVTMLNMLN (101 aa)) is mediates interaction with DZIP1. Lys-773 is covalently cross-linked (Glycyl lysine isopeptide (Lys-Gly) (interchain with G-Cter in ubiquitin)). A Glycyl lysine isopeptide (Lys-Gly) (interchain with G-Cter in SUMO2); alternate cross-link involves residue Lys-779. Lys-779 is covalently cross-linked (Glycyl lysine isopeptide (Lys-Gly) (interchain with G-Cter in ubiquitin); alternate). Residues Lys-784 and Lys-800 each participate in a glycyl lysine isopeptide (Lys-Gly) (interchain with G-Cter in ubiquitin) cross-link. A phosphoserine; by PKA mark is found at Ser-849, Ser-865, Ser-877, and Ser-907. A compositionally biased stretch (low complexity) spans 863-882 (RSSGISPCFSSRRSSEASQA). The segment at 863 to 918 (RSSGISPCFSSRRSSEASQAEGRPQNVSVADSYDPISTDASRRSSEASQSDGLPSL) is disordered. The span at 908–918 (EASQSDGLPSL) shows a compositional bias: polar residues. 2 positions are modified to phosphoserine; by PKA: Ser-980 and Ser-1006. The segment at 981–1042 (DGGAHGYGRR…PAMATSAEKR (62 aa)) is disordered.

This sequence belongs to the GLI C2H2-type zinc-finger protein family. In terms of assembly, the full-length GLI3 form (GLI3FL) interacts with SUFU and this interaction regulates the formation of either repressor or activator forms of GLI3. Its association with SUFU is regulated by Hh signaling and dissociation of the SUFU-GLI3 interaction requires the presence of the ciliary motor KIF3A. Interacts with KIF7. The activator form of GLI3 (GLI3A) but not the repressor form (GLI3R) can interact with TRPS1. The phosphorylated form interacts with BTRC. Interacts with ZIC1. Interacts with ZIC3 (via C2H2-type domains 3, 4 and 5); the interaction enhances its transcriptional activity. Interacts with WRD11; the interaction associates EMX1 with GLI3. Interacts with DZIP1; retains GLI3 within the cytoplasm. Post-translationally, phosphorylated on multiple sites by protein kinase A (PKA) and phosphorylation by PKA primes further phosphorylation by CK1 and GSK3. Phosphorylated by DYRK2 (in vitro). Phosphorylation is essential for its proteolytic processing. In terms of processing, transcriptional repressor GLI3R, a C-terminally truncated form, is generated from the full-length GLI3 protein (GLI3FL/GLI3-190) through proteolytic processing. This process requires PKA-primed phosphorylation of GLI3, ubiquitination of GLI3 and the presence of BTRC. GLI3FL is complexed with SUFU in the cytoplasm and is maintained in a neutral state. Without the Hh signal, the SUFU-GLI3 complex is recruited to cilia, leading to the efficient processing of GLI3FL into GLI3R. GLI3R formation leads to its dissociation from SUFU, allowing it to translocate into the nucleus, and repress Hh target genes. When Hh signaling is initiated, SUFU dissociates from GLI3FL and this has two consequences. First, GLI3R production is halted. Second, free GLI3FL translocates to the nucleus, where it is phosphorylated, destabilized, and converted to a transcriptional activator (GLI3A). Phosphorylated in vitro by ULK3. Is expressed in a wide variety of normal adult tissues, including lung, colon, spleen, placenta, testis, and myometrium.

Its subcellular location is the nucleus. It is found in the cytoplasm. The protein localises to the cell projection. It localises to the cilium. Functionally, has a dual function as a transcriptional activator and a repressor of the sonic hedgehog (Shh) pathway, and plays a role in limb development. The full-length GLI3 form (GLI3FL) after phosphorylation and nuclear translocation, acts as an activator (GLI3A) while GLI3R, its C-terminally truncated form, acts as a repressor. A proper balance between the GLI3 activator and the repressor GLI3R, rather than the repressor gradient itself or the activator/repressor ratio gradient, specifies limb digit number and identity. In concert with TRPS1, plays a role in regulating the size of the zone of distal chondrocytes, in restricting the zone of PTHLH expression in distal cells and in activating chondrocyte proliferation. Binds to the minimal GLI-consensus sequence 5'-GGGTGGTC-3'. In Homo sapiens (Human), this protein is Transcriptional activator GLI3 (GLI3).